Reading from the N-terminus, the 196-residue chain is Pyridoxal 5'-phosphate synthase subunit PdxT (196 aa).

Position 47 to 49 (47 to 49) interacts with L-glutamine; it reads GES. Cysteine 79 acts as the Nucleophile in catalysis. L-glutamine contacts are provided by residues arginine 106 and 134-135; that span reads IR. Active-site charge relay system residues include histidine 170 and glutamate 172.

The protein belongs to the glutaminase PdxT/SNO family. In terms of assembly, in the presence of PdxS, forms a dodecamer of heterodimers. Only shows activity in the heterodimer.

The catalysed reaction is aldehydo-D-ribose 5-phosphate + D-glyceraldehyde 3-phosphate + L-glutamine = pyridoxal 5'-phosphate + L-glutamate + phosphate + 3 H2O + H(+). It carries out the reaction L-glutamine + H2O = L-glutamate + NH4(+). It participates in cofactor biosynthesis; pyridoxal 5'-phosphate biosynthesis. Its function is as follows. Catalyzes the hydrolysis of glutamine to glutamate and ammonia as part of the biosynthesis of pyridoxal 5'-phosphate. The resulting ammonia molecule is channeled to the active site of PdxS. The polypeptide is Pyridoxal 5'-phosphate synthase subunit PdxT (Bacillus anthracis (strain A0248)).